A 76-amino-acid polypeptide reads, in one-letter code: Exodeoxyribonuclease 7 small subunit (76 aa).

This sequence belongs to the XseB family. In terms of assembly, heterooligomer composed of large and small subunits.

The protein resides in the cytoplasm. The enzyme catalyses Exonucleolytic cleavage in either 5'- to 3'- or 3'- to 5'-direction to yield nucleoside 5'-phosphates.. In terms of biological role, bidirectionally degrades single-stranded DNA into large acid-insoluble oligonucleotides, which are then degraded further into small acid-soluble oligonucleotides. The sequence is that of Exodeoxyribonuclease 7 small subunit from Methylococcus capsulatus (strain ATCC 33009 / NCIMB 11132 / Bath).